Reading from the N-terminus, the 362-residue chain is 3-dehydroquinate synthase (362 aa).

NAD(+) contacts are provided by residues 71-76, 105-109, 129-130, Lys142, Lys151, and 169-172; these read DGEQYK, GVVGD, TT, and CLKT. Positions 184, 247, and 264 each coordinate Zn(2+).

It belongs to the sugar phosphate cyclases superfamily. Dehydroquinate synthase family. Co(2+) is required as a cofactor. Zn(2+) serves as cofactor. The cofactor is NAD(+).

Its subcellular location is the cytoplasm. It carries out the reaction 7-phospho-2-dehydro-3-deoxy-D-arabino-heptonate = 3-dehydroquinate + phosphate. Its pathway is metabolic intermediate biosynthesis; chorismate biosynthesis; chorismate from D-erythrose 4-phosphate and phosphoenolpyruvate: step 2/7. Catalyzes the conversion of 3-deoxy-D-arabino-heptulosonate 7-phosphate (DAHP) to dehydroquinate (DHQ). The protein is 3-dehydroquinate synthase of Escherichia coli O81 (strain ED1a).